The following is a 425-amino-acid chain: Glutamyl-tRNA reductase (425 aa).

Substrate is bound by residues T47 to R50, S107, E112 to Q114, and Q118. C48 functions as the Nucleophile in the catalytic mechanism. G187 to A192 is an NADP(+) binding site.

Belongs to the glutamyl-tRNA reductase family. As to quaternary structure, homodimer.

The catalysed reaction is (S)-4-amino-5-oxopentanoate + tRNA(Glu) + NADP(+) = L-glutamyl-tRNA(Glu) + NADPH + H(+). It functions in the pathway porphyrin-containing compound metabolism; protoporphyrin-IX biosynthesis; 5-aminolevulinate from L-glutamyl-tRNA(Glu): step 1/2. Its pathway is porphyrin-containing compound metabolism; chlorophyll biosynthesis. In terms of biological role, catalyzes the NADPH-dependent reduction of glutamyl-tRNA(Glu) to glutamate 1-semialdehyde (GSA). This is Glutamyl-tRNA reductase from Roseiflexus sp. (strain RS-1).